A 543-amino-acid polypeptide reads, in one-letter code: Cobyric acid synthase (543 aa).

The GATase cobBQ-type domain maps to 260–483; that stretch reads MLDIVLVDLP…LHGVFDADGF (224 aa). C346 functions as the Nucleophile in the catalytic mechanism. H475 is an active-site residue.

The protein belongs to the CobB/CobQ family. CobQ subfamily.

The protein operates within cofactor biosynthesis; adenosylcobalamin biosynthesis. In terms of biological role, catalyzes amidations at positions B, D, E, and G on adenosylcobyrinic A,C-diamide. NH(2) groups are provided by glutamine, and one molecule of ATP is hydrogenolyzed for each amidation. This Nitratidesulfovibrio vulgaris (strain ATCC 29579 / DSM 644 / CCUG 34227 / NCIMB 8303 / VKM B-1760 / Hildenborough) (Desulfovibrio vulgaris) protein is Cobyric acid synthase.